Consider the following 232-residue polypeptide: tRNA1(Val) (adenine(37)-N6)-methyltransferase (232 aa).

It belongs to the methyltransferase superfamily. tRNA (adenine-N(6)-)-methyltransferase family.

It localises to the cytoplasm. It catalyses the reaction adenosine(37) in tRNA1(Val) + S-adenosyl-L-methionine = N(6)-methyladenosine(37) in tRNA1(Val) + S-adenosyl-L-homocysteine + H(+). In terms of biological role, specifically methylates the adenine in position 37 of tRNA(1)(Val) (anticodon cmo5UAC). This is tRNA1(Val) (adenine(37)-N6)-methyltransferase from Haemophilus influenzae (strain PittGG).